The following is a 347-amino-acid chain: Transcription factor JunD (347 aa).

The interval 1-46 is disordered; the sequence is METPFYGDEALSGLGGGGSSSGGGGSFASPGRLFPGAPPTAAPGSM. Over residues 13 to 26 the composition is skewed to gly residues; it reads GLGGGGSSSGGGGS. Positions 29-41 match the Menin-binding motif (MBM) motif; the sequence is SPGRLFPGAPPTA. Residues 48–57 carry the MAP kinase docking motif; essential for its phosphorylation motif; that stretch reads KKDALTLSLS. The interval 63 to 91 is disordered; the sequence is ALKPAAAPPPGPLRTDGAPGTAPPDGLLA. Ser-92 carries the phosphoserine modification. Position 102 is a phosphoserine; by MAPK8 (Ser-102). Position 119 is a phosphothreonine (Thr-119). 2 disordered regions span residues 164 to 183 and 218 to 264; these read AAAG…SELA and EPVP…IDMD. The span at 220–231 shows a compositional bias: pro residues; sequence VPFPPPPPPGTL. Residues Ser-251, Ser-255, and Ser-259 each carry the phosphoserine modification. The tract at residues 268 to 295 is basic motif; it reads RIKAERKRLRNRIAASKCRKRKLERISR. Residues 268–331 enclose the bZIP domain; the sequence is RIKAERKRLR…AQLKQKVLSH (64 aa). Residues 296–324 form a leucine-zipper region; the sequence is LEEKVKTLKSQNTELASTASLLREQVAQL.

It belongs to the bZIP family. Jun subfamily. As to quaternary structure, heterodimer; binds DNA as a heterodimer. Component of an AP-1 transcription factor complex composed of JUN-FOS heterodimers. As part of the AP-1 transcription factor complex, forms heterodimers with FOS proteins, thereby binding to the AP-1 consensus sequence and stimulating transcription. Forms heterodimers with FOSB; thereby binding to the AP-1 consensus sequence. Interacts (via MBM motif) with MEN1; this interaction represses transcriptional activation. Interacts with MAPK10; this interaction is inhibited in the presence of MEN1. Post-translationally, phosphorylated by MAP kinases MAPK8 and MAPK10; phosphorylation is inhibited in the presence of MEN1.

Its subcellular location is the nucleus. Its function is as follows. Transcription factor binding AP-1 sites. Heterodimerizes with proteins of the FOS family to form an AP-1 transcription factor complex, thereby enhancing their DNA binding activity to an AP-1 consensus sequence 3'-TGA[GC]TCA-5' and enhancing their transcriptional activity. The polypeptide is Transcription factor JunD (JUND) (Bos taurus (Bovine)).